The primary structure comprises 229 residues: NAD(P)H-quinone oxidoreductase subunit K, chloroplastic (229 aa).

Positions 43, 44, 108, and 139 each coordinate [4Fe-4S] cluster.

The protein belongs to the complex I 20 kDa subunit family. As to quaternary structure, NDH is composed of at least 16 different subunits, 5 of which are encoded in the nucleus. It depends on [4Fe-4S] cluster as a cofactor.

Its subcellular location is the plastid. It localises to the chloroplast thylakoid membrane. It catalyses the reaction a plastoquinone + NADH + (n+1) H(+)(in) = a plastoquinol + NAD(+) + n H(+)(out). The enzyme catalyses a plastoquinone + NADPH + (n+1) H(+)(in) = a plastoquinol + NADP(+) + n H(+)(out). Functionally, NDH shuttles electrons from NAD(P)H:plastoquinone, via FMN and iron-sulfur (Fe-S) centers, to quinones in the photosynthetic chain and possibly in a chloroplast respiratory chain. The immediate electron acceptor for the enzyme in this species is believed to be plastoquinone. Couples the redox reaction to proton translocation, and thus conserves the redox energy in a proton gradient. The chain is NAD(P)H-quinone oxidoreductase subunit K, chloroplastic from Aethionema cordifolium (Lebanon stonecress).